Here is a 121-residue protein sequence, read N- to C-terminus: Protein TusC (121 aa).

Belongs to the DsrF/TusC family. Heterohexamer, formed by a dimer of trimers. The hexameric TusBCD complex contains 2 copies each of TusB, TusC and TusD. The TusBCD complex interacts with TusE.

It is found in the cytoplasm. In terms of biological role, part of a sulfur-relay system required for 2-thiolation of 5-methylaminomethyl-2-thiouridine (mnm(5)s(2)U) at tRNA wobble positions. This chain is Protein TusC, found in Yersinia enterocolitica serotype O:8 / biotype 1B (strain NCTC 13174 / 8081).